The following is a 226-amino-acid chain: 2,3-bisphosphoglycerate-dependent phosphoglycerate mutase (226 aa).

Substrate-binding positions include 8–15, 21–22, Arg-58, 112–115, Lys-123, 139–140, and 183–184; these read RHGQSQWN, TG, ERMY, RR, and GN. The active-site Tele-phosphohistidine intermediate is the His-9. Glu-112 functions as the Proton donor/acceptor in the catalytic mechanism.

It belongs to the phosphoglycerate mutase family. BPG-dependent PGAM subfamily.

The catalysed reaction is (2R)-2-phosphoglycerate = (2R)-3-phosphoglycerate. It participates in carbohydrate degradation; glycolysis; pyruvate from D-glyceraldehyde 3-phosphate: step 3/5. Its function is as follows. Catalyzes the interconversion of 2-phosphoglycerate and 3-phosphoglycerate. The polypeptide is 2,3-bisphosphoglycerate-dependent phosphoglycerate mutase (Protochlamydia amoebophila (strain UWE25)).